We begin with the raw amino-acid sequence, 302 residues long: UDP-N-acetylenolpyruvoylglucosamine reductase (302 aa).

The 167-residue stretch at 30–196 (IGGPADLFVE…IAATLEMKKG (167 aa)) folds into the FAD-binding PCMH-type domain. Residue arginine 174 is part of the active site. The active-site Proton donor is the serine 225. Glutamate 295 is an active-site residue.

It belongs to the MurB family. The cofactor is FAD.

It localises to the cytoplasm. It catalyses the reaction UDP-N-acetyl-alpha-D-muramate + NADP(+) = UDP-N-acetyl-3-O-(1-carboxyvinyl)-alpha-D-glucosamine + NADPH + H(+). It participates in cell wall biogenesis; peptidoglycan biosynthesis. Functionally, cell wall formation. The protein is UDP-N-acetylenolpyruvoylglucosamine reductase of Anoxybacillus flavithermus (strain DSM 21510 / WK1).